The primary structure comprises 482 residues: Glutamate-rich WD repeat-containing protein 1 (482 aa).

Disordered regions lie at residues 1 to 75 (MSSK…WRAG) and 148 to 180 (QLHKTKHDDEDSDDDEDSDDDEESDDEDDEDKD). 2 stretches are compositionally biased toward acidic residues: residues 27 to 63 (NGEDDFENDDEVESFEDDEQSFEEIEEGGEEGGDNDG) and 157 to 180 (EDSDDDEDSDDDEESDDEDDEDKD). 5 WD repeats span residues 191–231 (NHNG…KALD), 294–334 (GHTE…PAIT), 337–377 (AHTA…DNSP), 383–423 (YHTG…DTEE), and 446–482 (QGQHDIKEVHWHPQIPHVAISTSIDGFNIFKSSNSEE).

It is found in the nucleus. The protein resides in the nucleolus. This is Glutamate-rich WD repeat-containing protein 1 (grwd1) from Dictyostelium discoideum (Social amoeba).